We begin with the raw amino-acid sequence, 265 residues long: tRNA (guanine-N(7)-)-methyltransferase (265 aa).

The tract at residues 1–40 (MIHDDDPNAPGAPHDDDATAAPASATRAAPAAGDDDDANP) is disordered. The segment covering 19–32 (TAAPASATRAAPAA) has biased composition (low complexity). Positions 95, 120, 147, and 170 each coordinate S-adenosyl-L-methionine. Residue Asp170 is part of the active site. Substrate is bound by residues Lys174, Asp206, and 241–244 (TKFE).

Belongs to the class I-like SAM-binding methyltransferase superfamily. TrmB family.

The enzyme catalyses guanosine(46) in tRNA + S-adenosyl-L-methionine = N(7)-methylguanosine(46) in tRNA + S-adenosyl-L-homocysteine. It participates in tRNA modification; N(7)-methylguanine-tRNA biosynthesis. Catalyzes the formation of N(7)-methylguanine at position 46 (m7G46) in tRNA. The chain is tRNA (guanine-N(7)-)-methyltransferase from Burkholderia pseudomallei (strain 1710b).